Consider the following 143-residue polypeptide: Large ribosomal subunit protein uL13 (143 aa).

This sequence belongs to the universal ribosomal protein uL13 family. As to quaternary structure, part of the 50S ribosomal subunit.

This protein is one of the early assembly proteins of the 50S ribosomal subunit, although it is not seen to bind rRNA by itself. It is important during the early stages of 50S assembly. This chain is Large ribosomal subunit protein uL13, found in Finegoldia magna (strain ATCC 29328 / DSM 20472 / WAL 2508) (Peptostreptococcus magnus).